We begin with the raw amino-acid sequence, 348 residues long: Flagellar P-ring protein (348 aa).

The N-terminal stretch at 1-16 (MRIFLLCLALSLSVFA) is a signal peptide.

This sequence belongs to the FlgI family. The basal body constitutes a major portion of the flagellar organelle and consists of four rings (L,P,S, and M) mounted on a central rod.

It localises to the periplasm. The protein localises to the bacterial flagellum basal body. In terms of biological role, assembles around the rod to form the L-ring and probably protects the motor/basal body from shearing forces during rotation. The protein is Flagellar P-ring protein of Campylobacter lari (strain RM2100 / D67 / ATCC BAA-1060).